We begin with the raw amino-acid sequence, 119 residues long: MKENRIRKNAEFRRVYRKGKSFSNRLLVLYVYKNYILKDINRIGISVSKKVGKSVVRSRVKRLIGESYRLNSSNLKKGHDFVIIARTACNGKRYSDIEDSIKNLFNKAGLVIYDEKNIT.

Belongs to the RnpA family. As to quaternary structure, consists of a catalytic RNA component (M1 or rnpB) and a protein subunit.

The catalysed reaction is Endonucleolytic cleavage of RNA, removing 5'-extranucleotides from tRNA precursor.. Its function is as follows. RNaseP catalyzes the removal of the 5'-leader sequence from pre-tRNA to produce the mature 5'-terminus. It can also cleave other RNA substrates such as 4.5S RNA. The protein component plays an auxiliary but essential role in vivo by binding to the 5'-leader sequence and broadening the substrate specificity of the ribozyme. In Clostridium acetobutylicum (strain ATCC 824 / DSM 792 / JCM 1419 / IAM 19013 / LMG 5710 / NBRC 13948 / NRRL B-527 / VKM B-1787 / 2291 / W), this protein is Ribonuclease P protein component.